Reading from the N-terminus, the 418-residue chain is Putative competence-damage inducible protein (418 aa).

The protein belongs to the CinA family.

The chain is Putative competence-damage inducible protein from Streptococcus pneumoniae serotype 19F (strain G54).